A 625-amino-acid chain; its full sequence is Glucokinase regulatory protein (625 aa).

SIS domains are found at residues 90 to 286 (VQEV…QGIA) and 320 to 499 (VSTS…LLGK). Residues 109–110 (TS), glutamate 153, and 179–181 (SVG) each bind beta-D-fructose 1-phosphate. 109–110 (TS) is a binding site for beta-D-fructose 6-phosphate. Residue 179 to 181 (SVG) participates in beta-D-fructose 6-phosphate binding. The segment at 199-200 (AV) is important for interaction with GCK. Glutamate 348 contributes to the beta-D-fructose 1-phosphate binding site. The tract at residues 463–465 (LLF) is essential for interaction with GCK. Residue lysine 514 coordinates beta-D-fructose 1-phosphate. Lysine 514 is a binding site for beta-D-fructose 6-phosphate.

Belongs to the GCKR family. In terms of assembly, interacts (fructose 6-phosphate bound form) with GCK. In terms of tissue distribution, found in liver and pancreas. Not detected in muscle, brain, heart, thymus, intestine, uterus, adipose tissue, kidney, adrenal, lung or spleen.

It is found in the cytoplasm. The protein localises to the nucleus. It localises to the mitochondrion. Functionally, regulates glucokinase (GCK) by forming an inactive complex with this enzyme. Acts by promoting GCK recruitment to the nucleus, possibly to provide a reserve of GCK that can be quickly released in the cytoplasm after a meal. The affinity of GCKR for GCK is modulated by fructose metabolites: GCKR with bound fructose 6-phosphate has increased affinity for GCK, while GCKR with bound fructose 1-phosphate has strongly decreased affinity for GCK and does not inhibit GCK activity. This chain is Glucokinase regulatory protein, found in Homo sapiens (Human).